A 596-amino-acid chain; its full sequence is Proline--tRNA ligase (596 aa).

This sequence belongs to the class-II aminoacyl-tRNA synthetase family. ProS type 1 subfamily. In terms of assembly, homodimer.

It localises to the cytoplasm. The catalysed reaction is tRNA(Pro) + L-proline + ATP = L-prolyl-tRNA(Pro) + AMP + diphosphate. Functionally, catalyzes the attachment of proline to tRNA(Pro) in a two-step reaction: proline is first activated by ATP to form Pro-AMP and then transferred to the acceptor end of tRNA(Pro). As ProRS can inadvertently accommodate and process non-cognate amino acids such as alanine and cysteine, to avoid such errors it has two additional distinct editing activities against alanine. One activity is designated as 'pretransfer' editing and involves the tRNA(Pro)-independent hydrolysis of activated Ala-AMP. The other activity is designated 'posttransfer' editing and involves deacylation of mischarged Ala-tRNA(Pro). The misacylated Cys-tRNA(Pro) is not edited by ProRS. The polypeptide is Proline--tRNA ligase (Prochlorococcus marinus (strain NATL1A)).